The primary structure comprises 301 residues: MVTPIAVVGPTASGKSALGIALAHKLDGEVVNVDSMQLYKGMDIGTAKLTVEEREGIAHHQLDVWDVTETASVARFQSDAVADVEDIMSRGKTPILVGGSMLYVQSLVDDWQFPPTDSAVRARFEARLADIGVEALHAELTQLDPEAAAVIENNDPRRTVRALEVIELTGQPFQASQPPKDAPPRWGTRIIGLKTTPEWLNPRIEQRTAMMFEQGFVAEVEHLVQQGLIADSTAGRAIGYSQVLAAMAGEMTWEDAFERTVTGTRRYVRRQRSWFNRDHRVSWVDASGDPTAQALEILGLQ.

Residue 9–16 (GPTASGKS) coordinates ATP. 11 to 16 (TASGKS) contributes to the substrate binding site. Residues 34–37 (DSMQ) form an interaction with substrate tRNA region.

This sequence belongs to the IPP transferase family. Monomer. Mg(2+) is required as a cofactor.

The enzyme catalyses adenosine(37) in tRNA + dimethylallyl diphosphate = N(6)-dimethylallyladenosine(37) in tRNA + diphosphate. In terms of biological role, catalyzes the transfer of a dimethylallyl group onto the adenine at position 37 in tRNAs that read codons beginning with uridine, leading to the formation of N6-(dimethylallyl)adenosine (i(6)A). This chain is tRNA dimethylallyltransferase, found in Corynebacterium glutamicum (strain R).